We begin with the raw amino-acid sequence, 281 residues long: Bifunctional protein FolD (281 aa).

NADP(+) contacts are provided by residues 165–167 (GRG), T192, and V233.

The protein belongs to the tetrahydrofolate dehydrogenase/cyclohydrolase family. In terms of assembly, homodimer.

The catalysed reaction is (6R)-5,10-methylene-5,6,7,8-tetrahydrofolate + NADP(+) = (6R)-5,10-methenyltetrahydrofolate + NADPH. It carries out the reaction (6R)-5,10-methenyltetrahydrofolate + H2O = (6R)-10-formyltetrahydrofolate + H(+). Its pathway is one-carbon metabolism; tetrahydrofolate interconversion. Its function is as follows. Catalyzes the oxidation of 5,10-methylenetetrahydrofolate to 5,10-methenyltetrahydrofolate and then the hydrolysis of 5,10-methenyltetrahydrofolate to 10-formyltetrahydrofolate. The sequence is that of Bifunctional protein FolD from Mycobacterium avium (strain 104).